We begin with the raw amino-acid sequence, 413 residues long: Arginine biosynthesis bifunctional protein ArgJ (413 aa).

Substrate is bound by residues Thr-160, Lys-186, Thr-197, Glu-284, Asn-408, and Ser-413. Thr-197 (nucleophile) is an active-site residue.

This sequence belongs to the ArgJ family. As to quaternary structure, heterotetramer of two alpha and two beta chains.

Its subcellular location is the cytoplasm. It catalyses the reaction N(2)-acetyl-L-ornithine + L-glutamate = N-acetyl-L-glutamate + L-ornithine. The enzyme catalyses L-glutamate + acetyl-CoA = N-acetyl-L-glutamate + CoA + H(+). Its pathway is amino-acid biosynthesis; L-arginine biosynthesis; L-ornithine and N-acetyl-L-glutamate from L-glutamate and N(2)-acetyl-L-ornithine (cyclic): step 1/1. It participates in amino-acid biosynthesis; L-arginine biosynthesis; N(2)-acetyl-L-ornithine from L-glutamate: step 1/4. Functionally, catalyzes two activities which are involved in the cyclic version of arginine biosynthesis: the synthesis of N-acetylglutamate from glutamate and acetyl-CoA as the acetyl donor, and of ornithine by transacetylation between N(2)-acetylornithine and glutamate. This Burkholderia mallei (strain ATCC 23344) protein is Arginine biosynthesis bifunctional protein ArgJ.